The sequence spans 288 residues: Translocon-associated protein subunit alpha (288 aa).

The signal sequence occupies residues Met1 to Ala28. Residues Asp29–Thr208 are Lumenal-facing. The segment at Glu34–Ile69 is disordered. 2 N-linked (GlcNAc...) asparagine glycosylation sites follow: Asn137 and Asn192. Residues Ile209–Val229 traverse the membrane as a helical segment. Residues Leu230–Gln288 lie on the Cytoplasmic side of the membrane. A disordered region spans residues Lys267–Gln288.

It belongs to the TRAP-alpha family. As to quaternary structure, heterotetramer of TRAP-alpha, TRAP-beta, TRAP-delta and TRAP-gamma. Phosphorylated in its cytoplasmic tail.

Its subcellular location is the endoplasmic reticulum membrane. In terms of biological role, TRAP proteins are part of a complex whose function is to bind calcium to the ER membrane and thereby regulate the retention of ER resident proteins. May be involved in the recycling of the translocation apparatus after completion of the translocation process or may function as a membrane-bound chaperone facilitating folding of translocated proteins. This Oncorhynchus mykiss (Rainbow trout) protein is Translocon-associated protein subunit alpha (ssr1).